We begin with the raw amino-acid sequence, 119 residues long: Endocuticle structural glycoprotein SgAbd-3 (119 aa).

Glutamine 1 carries the post-translational modification Pyrrolidone carboxylic acid. In terms of domain architecture, Chitin-binding type R&amp;R spans 24–98 (DGSYRYSFET…PQGAHLPTPP (75 aa)). The disordered stretch occupies residues 33 to 55 (TSDGQRASQEGALKQVSAPGPDG). O-linked (HexNAc...) threonine glycosylation is present at threonine 96.

In terms of biological role, component of the abdominal endocuticle. This Schistocerca gregaria (Desert locust) protein is Endocuticle structural glycoprotein SgAbd-3.